The chain runs to 652 residues: Probable export ATP-binding/permease protein PFL_2149 (652 aa).

Positions 6 to 244 (LHLTGISRSF…APSEPPVSVR (239 aa)) constitute an ABC transporter domain. 42-49 (GASGSGKS) is an ATP binding site. 5 consecutive transmembrane segments (helical) span residues 251–271 (LVASLGLFKEAFVMAWVALVS), 277–297 (LLTMLGIVIGITSVVSIVAIG), 525–545 (LALLLSLIAVISLVVGGIGVM), 586–606 (IGGAIGISLSFAIGYLFTLFI), and 615–635 (MGSIITAFACSTLIGIVFGFV).

Belongs to the ABC transporter superfamily. Macrolide exporter (TC 3.A.1.122) family. In terms of assembly, probably part of a tripartite efflux system, which is composed of an inner membrane transporter, a periplasmic membrane fusion protein, and an outer membrane component.

Its subcellular location is the cell inner membrane. Its function is as follows. Probably part of a tripartite efflux system. This is Probable export ATP-binding/permease protein PFL_2149 from Pseudomonas fluorescens (strain ATCC BAA-477 / NRRL B-23932 / Pf-5).